The primary structure comprises 90 residues: Antitoxin epsilon (90 aa).

This sequence belongs to the epsilon antitoxin family. In the presence of the zeta toxin, forms an inactive PezA(2)PezT(2) heterotetramer.

Functionally, antitoxin component of a type II toxin-antitoxin (TA) system. Neutralizes the toxic effect of cognate zeta toxin. Part of a postsegregational killing (PSK) system involved in the killing of plasmid-free cells. Continuous synthesis of the epsilon antitoxin is required to counteract the zeta toxin. This chain is Antitoxin epsilon, found in Streptococcus agalactiae.